The chain runs to 394 residues: NADH-quinone oxidoreductase subunit D 2 (394 aa).

The protein belongs to the complex I 49 kDa subunit family. In terms of assembly, NDH-1 is composed of 14 different subunits. Subunits NuoB, C, D, E, F, and G constitute the peripheral sector of the complex.

The protein localises to the cell membrane. The catalysed reaction is a quinone + NADH + 5 H(+)(in) = a quinol + NAD(+) + 4 H(+)(out). In terms of biological role, NDH-1 shuttles electrons from NADH, via FMN and iron-sulfur (Fe-S) centers, to quinones in the respiratory chain. The immediate electron acceptor for the enzyme in this species is believed to be a menaquinone. Couples the redox reaction to proton translocation (for every two electrons transferred, four hydrogen ions are translocated across the cytoplasmic membrane), and thus conserves the redox energy in a proton gradient. This is NADH-quinone oxidoreductase subunit D 2 from Streptomyces griseus subsp. griseus (strain JCM 4626 / CBS 651.72 / NBRC 13350 / KCC S-0626 / ISP 5235).